Consider the following 870-residue polypeptide: DNA mismatch repair protein MutS (870 aa).

608–615 (GPNMAGKS) provides a ligand contact to ATP.

Belongs to the DNA mismatch repair MutS family.

In terms of biological role, this protein is involved in the repair of mismatches in DNA. It is possible that it carries out the mismatch recognition step. This protein has a weak ATPase activity. This Persephonella marina (strain DSM 14350 / EX-H1) protein is DNA mismatch repair protein MutS.